Consider the following 262-residue polypeptide: Acyl-[acyl-carrier-protein]--UDP-N-acetylglucosamine O-acyltransferase (262 aa).

This sequence belongs to the transferase hexapeptide repeat family. LpxA subfamily. As to quaternary structure, homotrimer.

The protein resides in the cytoplasm. It carries out the reaction a (3R)-hydroxyacyl-[ACP] + UDP-N-acetyl-alpha-D-glucosamine = a UDP-3-O-[(3R)-3-hydroxyacyl]-N-acetyl-alpha-D-glucosamine + holo-[ACP]. It functions in the pathway glycolipid biosynthesis; lipid IV(A) biosynthesis; lipid IV(A) from (3R)-3-hydroxytetradecanoyl-[acyl-carrier-protein] and UDP-N-acetyl-alpha-D-glucosamine: step 1/6. Functionally, involved in the biosynthesis of lipid A, a phosphorylated glycolipid that anchors the lipopolysaccharide to the outer membrane of the cell. This chain is Acyl-[acyl-carrier-protein]--UDP-N-acetylglucosamine O-acyltransferase, found in Herminiimonas arsenicoxydans.